Reading from the N-terminus, the 254-residue chain is Pimeloyl-[acyl-carrier protein] methyl ester esterase (254 aa).

Substrate contacts are provided by residues Trp20, 80-81, and 141-145; these read SL and FLALQ. Catalysis depends on Ser80, which acts as the Nucleophile. Residues Asp205 and His233 contribute to the active site. His233 provides a ligand contact to substrate.

The protein belongs to the AB hydrolase superfamily. Carboxylesterase BioH family. Monomer.

It is found in the cytoplasm. It catalyses the reaction 6-carboxyhexanoyl-[ACP] methyl ester + H2O = 6-carboxyhexanoyl-[ACP] + methanol + H(+). Its pathway is cofactor biosynthesis; biotin biosynthesis. In terms of biological role, the physiological role of BioH is to remove the methyl group introduced by BioC when the pimeloyl moiety is complete. It allows to synthesize pimeloyl-ACP via the fatty acid synthetic pathway through the hydrolysis of the ester bonds of pimeloyl-ACP esters. This is Pimeloyl-[acyl-carrier protein] methyl ester esterase from Methylococcus capsulatus (strain ATCC 33009 / NCIMB 11132 / Bath).